Here is a 250-residue protein sequence, read N- to C-terminus: tRNA (guanine-N(1)-)-methyltransferase (250 aa).

Residues Gly116 and Ile136 to Leu141 each bind S-adenosyl-L-methionine.

It belongs to the RNA methyltransferase TrmD family. As to quaternary structure, homodimer.

The protein resides in the cytoplasm. It carries out the reaction guanosine(37) in tRNA + S-adenosyl-L-methionine = N(1)-methylguanosine(37) in tRNA + S-adenosyl-L-homocysteine + H(+). Its function is as follows. Specifically methylates guanosine-37 in various tRNAs. In Stutzerimonas stutzeri (strain A1501) (Pseudomonas stutzeri), this protein is tRNA (guanine-N(1)-)-methyltransferase.